The sequence spans 210 residues: Holliday junction branch migration complex subunit RuvA (210 aa).

The domain I stretch occupies residues 1 to 64 (MIGLIEGRVC…EDAQLLYGFL (64 aa)). Residues 65–143 (HPTERDVFRQ…HIQSDMSLLT (79 aa)) form a domain II region. The flexible linker stretch occupies residues 144–154 (EVEQQIGIAAN). The interval 155 to 210 (SEGVILAEVESALISLGYRDKEAQQAIKAARETDAGQQLVDTQSLLKLTLKQLSNF) is domain III.

It belongs to the RuvA family. Homotetramer. Forms an RuvA(8)-RuvB(12)-Holliday junction (HJ) complex. HJ DNA is sandwiched between 2 RuvA tetramers; dsDNA enters through RuvA and exits via RuvB. An RuvB hexamer assembles on each DNA strand where it exits the tetramer. Each RuvB hexamer is contacted by two RuvA subunits (via domain III) on 2 adjacent RuvB subunits; this complex drives branch migration. In the full resolvosome a probable DNA-RuvA(4)-RuvB(12)-RuvC(2) complex forms which resolves the HJ.

The protein resides in the cytoplasm. Its function is as follows. The RuvA-RuvB-RuvC complex processes Holliday junction (HJ) DNA during genetic recombination and DNA repair, while the RuvA-RuvB complex plays an important role in the rescue of blocked DNA replication forks via replication fork reversal (RFR). RuvA specifically binds to HJ cruciform DNA, conferring on it an open structure. The RuvB hexamer acts as an ATP-dependent pump, pulling dsDNA into and through the RuvAB complex. HJ branch migration allows RuvC to scan DNA until it finds its consensus sequence, where it cleaves and resolves the cruciform DNA. This chain is Holliday junction branch migration complex subunit RuvA, found in Psychrobacter sp. (strain PRwf-1).